A 534-amino-acid chain; its full sequence is 2,3-bisphosphoglycerate-independent phosphoglycerate mutase (534 aa).

Aspartate 15 and serine 65 together coordinate Mn(2+). Residue serine 65 is the Phosphoserine intermediate of the active site. Substrate is bound by residues histidine 126, 156-157 (RD), arginine 188, arginine 194, 261-264 (RPDR), and lysine 334. Aspartate 401, histidine 405, aspartate 442, histidine 443, and histidine 460 together coordinate Mn(2+).

This sequence belongs to the BPG-independent phosphoglycerate mutase family. It depends on Mn(2+) as a cofactor.

Its subcellular location is the plastid. The protein resides in the chloroplast. It catalyses the reaction (2R)-2-phosphoglycerate = (2R)-3-phosphoglycerate. It functions in the pathway carbohydrate degradation; glycolysis; pyruvate from D-glyceraldehyde 3-phosphate: step 3/5. Its function is as follows. Catalyzes the interconversion of 2-phosphoglycerate and 3-phosphoglycerate. This is 2,3-bisphosphoglycerate-independent phosphoglycerate mutase from Pyropia yezoensis (Susabi-nori).